Reading from the N-terminus, the 709-residue chain is MSINEEEYLRLEEEIDLGDIDFTDLEEQYEADLGYDNYVIVDGAPIAPEAKVPILIKVLRKLFSTAGEIVEGDEGIFMPMENGKSKGFLFIQYKNVADADTAIKKLNGKKLDAQHRLLVNRLSDIEKYGSVSGEFKEPEIEPFQSHGFLQSWLQDEQGKDQIVLHFNESVGVYWNKKTSEPEPVIEPRRGFTSKYAKFSPKGTYLFSIHPQGIQAWGGADFHRIKRFFHNQVRLVDFSPNEKYMVTLSPLPITLPDSTAERAQFPFGPESEGHKLVIWDMETGEPARTFALPPHLENQKEMQWPLVKWSFDDKYCARQGPDALAIYETPSFQLLEKKLVKIDGIQEFEWAPAGVKLHNSKEANEHLLSYWTPESANQTARVAIMQIPSRQVLRTVNLFQVSDCKMHWQSEGKLLCVKVDRHTKSGKTLFSNLDFFKVTERDIPVEKLELKDVIVNFSWEPKSERFVTISRLDDGNPNPAIPKNSITFYAVEEGKGKNANSKYKAYKQIENKHSNTVFWSPKGRYVAVATISRSSGEIEFYDVSFDDETSKKAAPANVKLLKTDKYSGMTNIAWDPSGRFLAAWSSSWLHTIENGYRIYEFTGNLLRDDSVDQFKEFIWRPRPESLLTSSDRKKVRSNLREYSAQFEEFDAMEADAAVREAILARRKALEDWRAYRAKHAGKKVQTSKVQAEVIEEIKEEIVEEKEEIVE.

The interval M1–D98 is sufficient for interaction with HCR1 and TIF32. The segment at M1–F221 is sufficient for interaction with PIC8. Residues N37–D124 form the RRM domain.

It belongs to the eIF-3 subunit B family. In terms of assembly, component of the eukaryotic translation initiation factor 3 (eIF-3) complex.

The protein localises to the cytoplasm. In terms of biological role, RNA-binding component of the eukaryotic translation initiation factor 3 (eIF-3) complex, which is involved in protein synthesis of a specialized repertoire of mRNAs and, together with other initiation factors, stimulates binding of mRNA and methionyl-tRNAi to the 40S ribosome. The eIF-3 complex specifically targets and initiates translation of a subset of mRNAs involved in cell proliferation. In Lodderomyces elongisporus (strain ATCC 11503 / CBS 2605 / JCM 1781 / NBRC 1676 / NRRL YB-4239) (Yeast), this protein is Eukaryotic translation initiation factor 3 subunit B.